We begin with the raw amino-acid sequence, 224 residues long: Uridylate kinase (224 aa).

Lysine 6–lysine 10 lines the ATP pocket. Glycine 41 serves as a coordination point for UMP. Glycine 42 and arginine 46 together coordinate ATP. UMP-binding positions include aspartate 63 and phenylalanine 111–threonine 117. Positions 137, 143, and 146 each coordinate ATP.

This sequence belongs to the UMP kinase family. As to quaternary structure, homohexamer.

The protein resides in the cytoplasm. It carries out the reaction UMP + ATP = UDP + ADP. It functions in the pathway pyrimidine metabolism; CTP biosynthesis via de novo pathway; UDP from UMP (UMPK route): step 1/1. Its activity is regulated as follows. Inhibited by UTP. Functionally, catalyzes the reversible phosphorylation of UMP to UDP. The protein is Uridylate kinase of Metallosphaera sedula (strain ATCC 51363 / DSM 5348 / JCM 9185 / NBRC 15509 / TH2).